We begin with the raw amino-acid sequence, 393 residues long: NAD(P)H-quinone oxidoreductase subunit H, chloroplastic (393 aa).

It belongs to the complex I 49 kDa subunit family. As to quaternary structure, NDH is composed of at least 16 different subunits, 5 of which are encoded in the nucleus.

It is found in the plastid. Its subcellular location is the chloroplast thylakoid membrane. It catalyses the reaction a plastoquinone + NADH + (n+1) H(+)(in) = a plastoquinol + NAD(+) + n H(+)(out). The enzyme catalyses a plastoquinone + NADPH + (n+1) H(+)(in) = a plastoquinol + NADP(+) + n H(+)(out). NDH shuttles electrons from NAD(P)H:plastoquinone, via FMN and iron-sulfur (Fe-S) centers, to quinones in the photosynthetic chain and possibly in a chloroplast respiratory chain. The immediate electron acceptor for the enzyme in this species is believed to be plastoquinone. Couples the redox reaction to proton translocation, and thus conserves the redox energy in a proton gradient. The chain is NAD(P)H-quinone oxidoreductase subunit H, chloroplastic from Piper cenocladum (Ant piper).